A 330-amino-acid polypeptide reads, in one-letter code: tRNA U34 carboxymethyltransferase (330 aa).

Residues lysine 91, tryptophan 105, lysine 110, glycine 130, 152–154 (DPS), 181–182 (IE), methionine 196, tyrosine 200, and arginine 315 each bind carboxy-S-adenosyl-L-methionine.

It belongs to the class I-like SAM-binding methyltransferase superfamily. CmoB family. Homotetramer.

It catalyses the reaction carboxy-S-adenosyl-L-methionine + 5-hydroxyuridine(34) in tRNA = 5-carboxymethoxyuridine(34) in tRNA + S-adenosyl-L-homocysteine + H(+). In terms of biological role, catalyzes carboxymethyl transfer from carboxy-S-adenosyl-L-methionine (Cx-SAM) to 5-hydroxyuridine (ho5U) to form 5-carboxymethoxyuridine (cmo5U) at position 34 in tRNAs. The protein is tRNA U34 carboxymethyltransferase of Shewanella pealeana (strain ATCC 700345 / ANG-SQ1).